Consider the following 215-residue polypeptide: 3-isopropylmalate dehydratase small subunit (215 aa).

The protein belongs to the LeuD family. LeuD type 1 subfamily. As to quaternary structure, heterodimer of LeuC and LeuD.

The enzyme catalyses (2R,3S)-3-isopropylmalate = (2S)-2-isopropylmalate. It participates in amino-acid biosynthesis; L-leucine biosynthesis; L-leucine from 3-methyl-2-oxobutanoate: step 2/4. Its function is as follows. Catalyzes the isomerization between 2-isopropylmalate and 3-isopropylmalate, via the formation of 2-isopropylmaleate. This Stutzerimonas stutzeri (strain A1501) (Pseudomonas stutzeri) protein is 3-isopropylmalate dehydratase small subunit.